Consider the following 351-residue polypeptide: UDP-3-O-acylglucosamine N-acyltransferase (351 aa).

His240 functions as the Proton acceptor in the catalytic mechanism.

Belongs to the transferase hexapeptide repeat family. LpxD subfamily. Homotrimer.

The enzyme catalyses a UDP-3-O-[(3R)-3-hydroxyacyl]-alpha-D-glucosamine + a (3R)-hydroxyacyl-[ACP] = a UDP-2-N,3-O-bis[(3R)-3-hydroxyacyl]-alpha-D-glucosamine + holo-[ACP] + H(+). It functions in the pathway bacterial outer membrane biogenesis; LPS lipid A biosynthesis. In terms of biological role, catalyzes the N-acylation of UDP-3-O-acylglucosamine using 3-hydroxyacyl-ACP as the acyl donor. Is involved in the biosynthesis of lipid A, a phosphorylated glycolipid that anchors the lipopolysaccharide to the outer membrane of the cell. This is UDP-3-O-acylglucosamine N-acyltransferase from Pseudomonas putida (strain ATCC 47054 / DSM 6125 / CFBP 8728 / NCIMB 11950 / KT2440).